The chain runs to 1168 residues: Carboxylic acid reductase (1168 aa).

Residues H290, S385, 407–408 (EG), T412, D485, 497–500 (YLDR), K506, and K606 each bind AMP. The Carrier domain maps to 645–720 (APVLPTLCRA…ALADHIEAAR (76 aa)). Residue S679 is modified to O-(pantetheine 4'-phosphoryl)serine. NADP(+)-binding positions include 777–780 (TGFL), R804, R814, 844–845 (DK), 870–872 (PAA), S910, Y946, and K950.

It belongs to the ATP-dependent AMP-binding enzyme family. Carboxylic acid reductase subfamily. Pantetheine 4'-phosphate serves as cofactor.

It catalyses the reaction a carboxylate + ATP + NADPH + H(+) = an aldehyde + AMP + diphosphate + NADP(+). The enzyme catalyses a medium-chain fatty acid + ATP + H(+) = a medium-chain fatty acyl-AMP + diphosphate. It carries out the reaction a long-chain fatty acid + ATP + H(+) = a long-chain fatty acyl-AMP + diphosphate. The catalysed reaction is dodecanoate + ATP + H(+) = dodecanoyl-AMP + diphosphate. It catalyses the reaction hexadecanoate + ATP + H(+) = hexadecanoyl-AMP + diphosphate. In terms of biological role, catalyzes the ATP- and NADPH-dependent reduction of carboxylic acids to the corresponding aldehydes. In vitro, also catalyzes the activation of medium/long-chain fatty acids as acyl-adenylates (acyl-AMP). This is Carboxylic acid reductase from Mycobacterium tuberculosis (strain ATCC 25618 / H37Rv).